The sequence spans 418 residues: Light-independent protochlorophyllide reductase subunit N (418 aa).

Residues Cys-17, Cys-42, and Cys-103 each coordinate [4Fe-4S] cluster.

This sequence belongs to the BchN/ChlN family. In terms of assembly, protochlorophyllide reductase is composed of three subunits; ChlL, ChlN and ChlB. Forms a heterotetramer of two ChlB and two ChlN subunits. [4Fe-4S] cluster serves as cofactor.

The catalysed reaction is chlorophyllide a + oxidized 2[4Fe-4S]-[ferredoxin] + 2 ADP + 2 phosphate = protochlorophyllide a + reduced 2[4Fe-4S]-[ferredoxin] + 2 ATP + 2 H2O. It functions in the pathway porphyrin-containing compound metabolism; chlorophyll biosynthesis (light-independent). Its function is as follows. Component of the dark-operative protochlorophyllide reductase (DPOR) that uses Mg-ATP and reduced ferredoxin to reduce ring D of protochlorophyllide (Pchlide) to form chlorophyllide a (Chlide). This reaction is light-independent. The NB-protein (ChlN-ChlB) is the catalytic component of the complex. This is Light-independent protochlorophyllide reductase subunit N from Prochlorococcus marinus (strain MIT 9211).